Reading from the N-terminus, the 489-residue chain is Inositol-pentakisphosphate 2-kinase (489 aa).

Positions 136–140 (EIKPK) match the EXKPK motif motif.

Belongs to the IPK1 type 2 family.

It is found in the cytoplasm. Its subcellular location is the nucleus. It catalyses the reaction 1D-myo-inositol 1,3,4,5,6-pentakisphosphate + ATP = 1D-myo-inositol hexakisphosphate + ADP + H(+). Its function is as follows. Phosphorylates Ins(1,3,4,5,6)P5 at position 2 to form Ins(1,2,3,4,5,6)P6 (InsP6 or phytate). InsP6 is involved in many processes such as mRNA export, non-homologous end-joining, endocytosis, ion channel regulation. It also protects cells from TNF-alpha-induced apoptosis. The chain is Inositol-pentakisphosphate 2-kinase (Ippk) from Rattus norvegicus (Rat).